Reading from the N-terminus, the 394-residue chain is NADH-quinone oxidoreductase subunit D 2 (394 aa).

It belongs to the complex I 49 kDa subunit family. In terms of assembly, NDH-1 is composed of 14 different subunits. Subunits NuoB, C, D, E, F, and G constitute the peripheral sector of the complex.

It localises to the cell membrane. The catalysed reaction is a quinone + NADH + 5 H(+)(in) = a quinol + NAD(+) + 4 H(+)(out). NDH-1 shuttles electrons from NADH, via FMN and iron-sulfur (Fe-S) centers, to quinones in the respiratory chain. The immediate electron acceptor for the enzyme in this species is believed to be a menaquinone. Couples the redox reaction to proton translocation (for every two electrons transferred, four hydrogen ions are translocated across the cytoplasmic membrane), and thus conserves the redox energy in a proton gradient. This Streptomyces griseus subsp. griseus (strain JCM 4626 / CBS 651.72 / NBRC 13350 / KCC S-0626 / ISP 5235) protein is NADH-quinone oxidoreductase subunit D 2.